The primary structure comprises 913 residues: Calcium-activated chloride channel regulator 1 (913 aa).

The signal sequence occupies residues 1–21 (MESLKSPVFLLILHLLEGVLS). The segment at 46 to 199 (DEALIQHIKD…AITGKNQVRR (154 aa)) is metalloprotease domain. Residue histidine 156 coordinates Zn(2+). Residue glutamate 157 is part of the active site. Zn(2+) is bound by residues histidine 160 and asparagine 167. The 170-residue stretch at 307 to 476 (IVCLVLDKSG…NGLVDAFAAL (170 aa)) folds into the VWFA domain. Asparagine 504, asparagine 770, asparagine 804, asparagine 810, asparagine 836, and asparagine 887 each carry an N-linked (GlcNAc...) asparagine glycan.

This sequence belongs to the CLCR family. The 110 kDa translation product is autoproteolytically cleaved by the metalloprotease domain in the endoplasmic reticulum into a 75 kDa N-terminal and a 35 kDa C-terminal products that remain physically associated with each other. The cleavage is necessary for calcium-activated chloride channel (CaCC) activation activity. In terms of processing, glycosylated. In terms of tissue distribution, exclusively expressed in the digestive and respiratory tracts and in the uterus (at protein level). Expressed in small intestine, colon, stomach, and uterus and slightly expressed in trachea tissue. Exclusively expressed in the mucin granule membranes of gastrointestinal, respiratory, and uterine goblet cells and other mucin-producing cells. In the colon, expressed in the surface mucous cells. In the stomach highly expressed in the surface epithelium in the pylorus. Strongly expressed in the airway epithelium of lung tissues associated with airway hyperresponsiveness (AHR).

It localises to the secreted. Its subcellular location is the extracellular space. In terms of biological role, may be involved in mediating calcium-activated chloride conductance. May play critical roles in goblet cell metaplasia, mucus hypersecretion, cystic fibrosis and AHR. May be involved in the regulation of mucus production and/or secretion by goblet cells. Involved in the regulation of tissue inflammation in the innate immune response. May play a role as a tumor suppressor. Induces MUC5AC. In Mus musculus (Mouse), this protein is Calcium-activated chloride channel regulator 1 (Clca1).